We begin with the raw amino-acid sequence, 319 residues long: Cell surface A33 antigen (319 aa).

A signal peptide spans Met-1–Ala-21. Positions Ile-22 to Arg-134 constitute an Ig-like V-type domain. Residues Ile-22–Val-235 lie on the Extracellular side of the membrane. Disulfide bonds link Cys-43/Cys-117, Cys-146/Cys-222, and Cys-162/Cys-211. N-linked (GlcNAc...) asparagine glycosylation is found at Asn-112, Asn-200, and Asn-223. Residues Pro-140–Ala-227 enclose the Ig-like C2-type domain. A helical membrane pass occupies residues Ala-236–Ile-256. The Cytoplasmic segment spans residues Tyr-257–Gln-319. Composition is skewed to basic and acidic residues over residues Asn-267 to Arg-295 and Gln-303 to Gln-319. Residues Asn-267–Gln-319 are disordered.

In terms of processing, N-glycosylated, contains approximately 8 kDa of N-linked carbohydrate. Palmitoylated. In terms of tissue distribution, expressed in normal gastrointestinal epithelium and in 95% of colon cancers.

It localises to the membrane. Its function is as follows. May play a role in cell-cell recognition and signaling. The polypeptide is Cell surface A33 antigen (GPA33) (Homo sapiens (Human)).